The primary structure comprises 300 residues: D-alanine--D-alanine ligase (300 aa).

Residues 99-293 form the ATP-grasp domain; it reads KKILKYANIN…FAELLNSIVK (195 aa). 126-181 provides a ligand contact to ATP; sequence IEKIGYPVFVKPNSGGSSVATNLVKNKEGIKEAVELALKYDKEVMIENYTKGEEIT. The Mg(2+) site is built by aspartate 248, glutamate 260, and asparagine 262.

Belongs to the D-alanine--D-alanine ligase family. Mg(2+) serves as cofactor. Requires Mn(2+) as cofactor.

Its subcellular location is the cytoplasm. The enzyme catalyses 2 D-alanine + ATP = D-alanyl-D-alanine + ADP + phosphate + H(+). Its pathway is cell wall biogenesis; peptidoglycan biosynthesis. In terms of biological role, cell wall formation. The sequence is that of D-alanine--D-alanine ligase from Clostridium botulinum (strain Loch Maree / Type A3).